The chain runs to 361 residues: UDP-D-xylose:L-fucose alpha-1,3-D-xylosyltransferase 1 (361 aa).

Residues 1–21 (MEQKQHILKQSTFSSSPSSYS) form a disordered region. Topologically, residues 1-34 (MEQKQHILKQSTFSSSPSSYSSISDRPISLLSRN) are cytoplasmic. Positions 11 to 21 (STFSSSPSSYS) are enriched in low complexity. The helical; Signal-anchor for type II membrane protein transmembrane segment at 35–55 (GLLLLLLALVLLLGVLLPWPG) threads the bilayer. At 56-361 (SPLFLFPNRL…ALESPLGKLE (306 aa)) the chain is on the lumenal side. 2 N-linked (GlcNAc...) asparagine glycosylation sites follow: Asn92 and Asn167. A DXD motif motif is present at residues 190–192 (DVD). N-linked (GlcNAc...) asparagine glycans are attached at residues Asn222 and Asn286.

Belongs to the glycosyltransferase 77 family. Mn(2+) is required as a cofactor. The cofactor is Mg(2+). In terms of processing, glycosylated. In terms of tissue distribution, expressed in roots, rosette leaves, cauline leaves and stems.

It is found in the golgi apparatus membrane. Its function is as follows. Catalyzes the transfer of D-xylose from UDP-alpha-D-xylose onto L-fucose. Probably involved in the biosynthesis of rhamnogalacturonan II (RG-II) through xylosylation of the internal fucose moiety of the A-chain of RG-II, a structurally complex pectic polysaccharide of the primary cell wall. RG-II is essential for the cell wall integrity of rapidly growing tissues such as roots and pollen tube growth and elongation. The sequence is that of UDP-D-xylose:L-fucose alpha-1,3-D-xylosyltransferase 1 from Arabidopsis thaliana (Mouse-ear cress).